The sequence spans 338 residues: MEERILTQNFTQEDATEYSLRPRWLSEYIGQEKIKQELKIYIEAAKKRGEPLDHVLLYGPPGLGKTTLATVISNEMGVGIKITSGPAIERSGDLAAILTNLQENDILFIDEIHRLNRSVEEILYPAMEDFELDIVIGKGPSARSIRLSLPKFTLIGATTRAALMTSPLRSRFGVINRLDYYSVEELKEIIKRSANILNIGIDEDAAFEIARRSRGTPRIANRLLKRVRDFAEVKGNGYIDYNTANIALNMLGVDEMGLEEIDRKILIAIIEKFGGGPVGIDAIAASVGEDGDTIEDMYEPYLMQIGFLNRTPRGRVVTKLAYQYLKYPYVEQRRIEDV.

Positions 1–181 are large ATPase domain (RuvB-L); it reads MEERILTQNF…FGVINRLDYY (181 aa). ATP is bound by residues Leu20, Arg21, Gly62, Lys65, Thr66, Thr67, 128 to 130, Arg171, Tyr181, and Arg218; that span reads EDF. Thr66 contributes to the Mg(2+) binding site. The segment at 182-252 is small ATPAse domain (RuvB-S); it reads SVEELKEIIK…TANIALNMLG (71 aa). The head domain (RuvB-H) stretch occupies residues 255-338; sequence EMGLEEIDRK…YVEQRRIEDV (84 aa). DNA contacts are provided by Arg310 and Arg315.

The protein belongs to the RuvB family. In terms of assembly, homohexamer. Forms an RuvA(8)-RuvB(12)-Holliday junction (HJ) complex. HJ DNA is sandwiched between 2 RuvA tetramers; dsDNA enters through RuvA and exits via RuvB. An RuvB hexamer assembles on each DNA strand where it exits the tetramer. Each RuvB hexamer is contacted by two RuvA subunits (via domain III) on 2 adjacent RuvB subunits; this complex drives branch migration. In the full resolvosome a probable DNA-RuvA(4)-RuvB(12)-RuvC(2) complex forms which resolves the HJ.

The protein localises to the cytoplasm. It catalyses the reaction ATP + H2O = ADP + phosphate + H(+). Functionally, the RuvA-RuvB-RuvC complex processes Holliday junction (HJ) DNA during genetic recombination and DNA repair, while the RuvA-RuvB complex plays an important role in the rescue of blocked DNA replication forks via replication fork reversal (RFR). RuvA specifically binds to HJ cruciform DNA, conferring on it an open structure. The RuvB hexamer acts as an ATP-dependent pump, pulling dsDNA into and through the RuvAB complex. RuvB forms 2 homohexamers on either side of HJ DNA bound by 1 or 2 RuvA tetramers; 4 subunits per hexamer contact DNA at a time. Coordinated motions by a converter formed by DNA-disengaged RuvB subunits stimulates ATP hydrolysis and nucleotide exchange. Immobilization of the converter enables RuvB to convert the ATP-contained energy into a lever motion, pulling 2 nucleotides of DNA out of the RuvA tetramer per ATP hydrolyzed, thus driving DNA branch migration. The RuvB motors rotate together with the DNA substrate, which together with the progressing nucleotide cycle form the mechanistic basis for DNA recombination by continuous HJ branch migration. Branch migration allows RuvC to scan DNA until it finds its consensus sequence, where it cleaves and resolves cruciform DNA. This chain is Holliday junction branch migration complex subunit RuvB, found in Caldanaerobacter subterraneus subsp. tengcongensis (strain DSM 15242 / JCM 11007 / NBRC 100824 / MB4) (Thermoanaerobacter tengcongensis).